Consider the following 303-residue polypeptide: Holdfast attachment protein D (303 aa).

The span at 266–281 (SARSTMSGPKSCSTTF) shows a compositional bias: polar residues. The disordered stretch occupies residues 266–303 (SARSTMSGPKSCSTTFRPIRAAASRRPPASAGTRAMTR). The span at 282–303 (RPIRAAASRRPPASAGTRAMTR) shows a compositional bias: low complexity.

The protein resides in the cell outer membrane. In terms of biological role, involved in attachment of the holdfast to the cell. The holdfast is a structure that allows the bacteria to firmly adhere to surfaces. This is Holdfast attachment protein D (hfaD) from Caulobacter vibrioides (strain ATCC 19089 / CIP 103742 / CB 15) (Caulobacter crescentus).